A 176-amino-acid polypeptide reads, in one-letter code: Large ribosomal subunit protein uL30 (176 aa).

It belongs to the universal ribosomal protein uL30 family. Part of the 50S ribosomal subunit.

The protein is Large ribosomal subunit protein uL30 of Pyrobaculum arsenaticum (strain DSM 13514 / JCM 11321 / PZ6).